Reading from the N-terminus, the 1050-residue chain is Self-sufficient cytochrome P450 monooxygenase CYP505E3 (1050 aa).

Cys406 lines the heme pocket. Polar residues predominate over residues 459 to 481 (RGQSATGLSQGSMSASGATSSVA). Positions 459–495 (RGQSATGLSQGSMSASGATSSVASPGPPAATGAQSNP) are disordered. The region spanning 501–641 (ISFFYGSNSG…DLELWEETNL (141 aa)) is the Flavodoxin-like domain. Residues 507 to 511 (SNSGT) and 585 to 617 (VFGC…TRLT) each bind FMN. The 229-residue stretch at 679–907 (RGLVEAKVTA…RPAKDAFHLP (229 aa)) folds into the FAD-binding FR-type domain.

In the N-terminal section; belongs to the cytochrome P450 family. Requires FAD as cofactor. It depends on FMN as a cofactor. The cofactor is heme.

It catalyses the reaction 2 oxidized [cytochrome P450] + NADPH = 2 reduced [cytochrome P450] + NADP(+) + H(+). The catalysed reaction is an organic molecule + reduced [NADPH--hemoprotein reductase] + O2 = an alcohol + oxidized [NADPH--hemoprotein reductase] + H2O + H(+). It carries out the reaction decane + reduced [NADPH--hemoprotein reductase] + O2 = 3-decanol + oxidized [NADPH--hemoprotein reductase] + H2O + H(+). The enzyme catalyses dodecane + reduced [NADPH--hemoprotein reductase] + O2 = 5-dodecanol + oxidized [NADPH--hemoprotein reductase] + H2O + H(+). It catalyses the reaction tetradecane + reduced [NADPH--hemoprotein reductase] + O2 = 7-tetradecanol + oxidized [NADPH--hemoprotein reductase] + H2O + H(+). The catalysed reaction is hexadecane + reduced [NADPH--hemoprotein reductase] + O2 = 9-hexadecanol + oxidized [NADPH--hemoprotein reductase] + H2O + H(+). It carries out the reaction dodecanoate + reduced [NADPH--hemoprotein reductase] + O2 = 5-hydroxydodecanoate + oxidized [NADPH--hemoprotein reductase] + H2O + H(+). The enzyme catalyses tetradecanoate + reduced [NADPH--hemoprotein reductase] + O2 = 7-hydroxytetradecanoate + oxidized [NADPH--hemoprotein reductase] + H2O + H(+). It catalyses the reaction hexadecanoate + reduced [NADPH--hemoprotein reductase] + O2 = 9-hydroxyhexadecanoate + oxidized [NADPH--hemoprotein reductase] + H2O + H(+). The catalysed reaction is decan-1-ol + reduced [NADPH--hemoprotein reductase] + O2 = 1,3-decanediol + oxidized [NADPH--hemoprotein reductase] + H2O + H(+). It carries out the reaction decan-1-ol + reduced [NADPH--hemoprotein reductase] + O2 = 1,7-decanediol + oxidized [NADPH--hemoprotein reductase] + H2O + H(+). The enzyme catalyses dodecan-1-ol + reduced [NADPH--hemoprotein reductase] + O2 = 1,5-dodecanediol + oxidized [NADPH--hemoprotein reductase] + H2O + H(+). It catalyses the reaction dodecan-1-ol + reduced [NADPH--hemoprotein reductase] + O2 = 1,4-dodecanediol + oxidized [NADPH--hemoprotein reductase] + H2O + H(+). The catalysed reaction is dodecan-1-ol + reduced [NADPH--hemoprotein reductase] + O2 = 1,6-dodecanediol + oxidized [NADPH--hemoprotein reductase] + H2O + H(+). In terms of biological role, self-sufficient cytochrome P450 monooxygenase that catalyzes the regioselective in-chain hydroxylation of alkanes, fatty alcohols, and fatty acids at the omega-7 position. Performs hydroxylation of C10-C16 n-alkanes and C12 and C14 fatty alcohols; and thereby enables the one step biocatalytic synthesis of rare alcohols such as 5-dodecanol and 7-tetradecanol. Converts 1-dodecanol into 1,5-dodecanediol as major product with very little sub-terminally hydroxylated products with the 1,4-dodecanediol and 1,6-dodecanediol more abundant. Does not use hexadecanediol nor decanoic acid as substrates. Converts dodecanoic acid to 5-hydroxydodecanoic acid which can be further converted into delta-dodecalactone by lactonization of the 5-hydroxy acid at low pH. Also gives sub-terminal hydroxylation of dodecanoic acid with 9-hydroxydodecanoic acid being the second most abundant product. The C14 and C16 fatty acids are double hydroxylated to yield dihydroxy acids hydroxylated at both the omega-7 position and a sub-terminal position (omega-1, omega-2, or omega-3). The sequence is that of Self-sufficient cytochrome P450 monooxygenase CYP505E3 from Aspergillus terreus (strain NIH 2624 / FGSC A1156).